The chain runs to 481 residues: Zinc metalloproteinase/disintegrin (481 aa).

Residues 1–20 (MIEVLLVTICLAVFPYQGSS) form the signal peptide. Residues 21-189 (IILESGNVND…KKASQLYLTP (169 aa)) constitute a propeptide that is removed on maturation. Pyrrolidone carboxylic acid (Glu) is present on Glu-190. A Peptidase M12B domain is found at 197 to 392 (RYIKLAIVVD…DNPQCILNAP (196 aa)). 296–299 (RNTI) contributes to the an L-amino acid tripeptide binding site. 3 disulfides stabilise this stretch: Cys-308-Cys-387, Cys-349-Cys-371, and Cys-351-Cys-354. His-333 contributes to the Zn(2+) binding site. Residue Glu-334 is part of the active site. Residues His-337 and His-343 each contribute to the Zn(2+) site. Ser-357 serves as a coordination point for an L-amino acid tripeptide. Residues 393–410 (LRTDTVSTPVSGNEFLEA) constitute a propeptide that is removed on maturation. The Disintegrin domain maps to 400–481 (TPVSGNEFLE…ADCPRNGLYG (82 aa)). Disulfide bonds link Cys-414–Cys-429, Cys-416–Cys-424, Cys-423–Cys-446, Cys-437–Cys-443, Cys-442–Cys-467, and Cys-455–Cys-474. The short motif at 459–461 (RGD) is the Cell attachment site element.

It belongs to the venom metalloproteinase (M12B) family. P-II subfamily. P-IIa sub-subfamily. Monomer. Requires Zn(2+) as cofactor. The N-terminus is blocked. As to expression, expressed by the venom gland.

Its subcellular location is the secreted. With respect to regulation, inhibited by EDTA and 1,10-phenanthroline. Is also inhibited by endogenous tripeptide inhibitors pyroGlu-Asn-Trp, pyroGlu-Gln-Trp, and pyroGlu-Lys-Trp. Its function is as follows. Potent fibrinogenolytic protease which cleaves mainly the Aalpha chain of fibrinogen (FGA) and slightly the Bbeta (FGB) and the gamma (FGG) chains. May possess hemorrhagic activity. Compared to other SVMP, the substrate-binding pocket is relatively shallow. Is less susceptible to tripeptide inhibitors than TM-1 (AC U3KRG1) and TM-2. Functionally, inhibits platelet aggregation induced by ADP, thrombin, platelet-activating factor and collagen. Acts by inhibiting fibrinogen interaction with platelet receptors GPIIb/GPIIIa (ITGA2B/ITGB3). The protein is Zinc metalloproteinase/disintegrin of Protobothrops mucrosquamatus (Taiwan habu).